The following is a 273-amino-acid chain: Glutamate 5-kinase (273 aa).

Residue Lys15 coordinates ATP. Residues Ser55, Asp142, and Asn158 each contribute to the substrate site. ATP is bound by residues 178–179 and 220–226; these read SD and TGGMLSK.

Belongs to the glutamate 5-kinase family.

The protein localises to the cytoplasm. It carries out the reaction L-glutamate + ATP = L-glutamyl 5-phosphate + ADP. It participates in amino-acid biosynthesis; L-proline biosynthesis; L-glutamate 5-semialdehyde from L-glutamate: step 1/2. Its function is as follows. Catalyzes the transfer of a phosphate group to glutamate to form L-glutamate 5-phosphate. This is Glutamate 5-kinase from Streptococcus pyogenes serotype M4 (strain MGAS10750).